The sequence spans 217 residues: Large ribosomal subunit protein eL6 (217 aa).

It belongs to the eukaryotic ribosomal protein eL6 family. Component of the large ribosomal subunit. May bind IPO9 with low affinity.

Its subcellular location is the cytoplasm. The protein resides in the cytosol. It is found in the rough endoplasmic reticulum. Component of the large ribosomal subunit. In Caenorhabditis elegans, this protein is Large ribosomal subunit protein eL6 (rpl-6).